A 129-amino-acid chain; its full sequence is Small ribosomal subunit protein uS11 (129 aa).

The protein belongs to the universal ribosomal protein uS11 family. As to quaternary structure, part of the 30S ribosomal subunit. Interacts with proteins S7 and S18. Binds to IF-3.

In terms of biological role, located on the platform of the 30S subunit, it bridges several disparate RNA helices of the 16S rRNA. Forms part of the Shine-Dalgarno cleft in the 70S ribosome. The chain is Small ribosomal subunit protein uS11 from Roseobacter denitrificans (strain ATCC 33942 / OCh 114) (Erythrobacter sp. (strain OCh 114)).